Reading from the N-terminus, the 324-residue chain is Beta-ketoacyl-[acyl-carrier-protein] synthase III (324 aa).

Residues C114 and H251 contribute to the active site. The interval 252 to 256 is ACP-binding; it reads QANKR. N281 is a catalytic residue.

It belongs to the thiolase-like superfamily. FabH family. In terms of assembly, homodimer.

Its subcellular location is the cytoplasm. The enzyme catalyses malonyl-[ACP] + acetyl-CoA + H(+) = 3-oxobutanoyl-[ACP] + CO2 + CoA. It participates in lipid metabolism; fatty acid biosynthesis. Functionally, catalyzes the condensation reaction of fatty acid synthesis by the addition to an acyl acceptor of two carbons from malonyl-ACP. Catalyzes the first condensation reaction which initiates fatty acid synthesis and may therefore play a role in governing the total rate of fatty acid production. Possesses both acetoacetyl-ACP synthase and acetyl transacylase activities. Its substrate specificity determines the biosynthesis of branched-chain and/or straight-chain of fatty acids. This Bradyrhizobium sp. (strain BTAi1 / ATCC BAA-1182) protein is Beta-ketoacyl-[acyl-carrier-protein] synthase III.